Reading from the N-terminus, the 337-residue chain is Aspartate carbamoyltransferase catalytic subunit (337 aa).

Residues arginine 57 and threonine 58 each coordinate carbamoyl phosphate. Lysine 86 provides a ligand contact to L-aspartate. Residues arginine 107, histidine 135, and glutamine 138 each contribute to the carbamoyl phosphate site. L-aspartate is bound by residues arginine 172 and arginine 234. Positions 274 and 275 each coordinate carbamoyl phosphate.

Belongs to the aspartate/ornithine carbamoyltransferase superfamily. ATCase family. Heterododecamer (2C3:3R2) of six catalytic PyrB chains organized as two trimers (C3), and six regulatory PyrI chains organized as three dimers (R2).

The enzyme catalyses carbamoyl phosphate + L-aspartate = N-carbamoyl-L-aspartate + phosphate + H(+). It participates in pyrimidine metabolism; UMP biosynthesis via de novo pathway; (S)-dihydroorotate from bicarbonate: step 2/3. Catalyzes the condensation of carbamoyl phosphate and aspartate to form carbamoyl aspartate and inorganic phosphate, the committed step in the de novo pyrimidine nucleotide biosynthesis pathway. In Saccharophagus degradans (strain 2-40 / ATCC 43961 / DSM 17024), this protein is Aspartate carbamoyltransferase catalytic subunit.